We begin with the raw amino-acid sequence, 363 residues long: Probable endopolygalacturonase A (363 aa).

A signal peptide spans 1–20 (MQLLQSSVIAATVGAALVAA). The propeptide occupies 21–28 (APVELEAR). A disulfide bridge links cysteine 31 with cysteine 46. PbH1 repeat units follow at residues 158–187 (SDNLNITDVTIDNSAGTAEGHNTDAFDIGS), 188–209 (STYINIDGATVYNQDDCLAINS), 210–230 (GSHITFTNGYCDGGHGLSIGS), 239–260 (VEDVTISNSKVVNSQNGVRIKT), 268–290 (VSNVKFEDITLSGITKYGLVVEQ), and 302–347 (TNGI…SITG). The N-linked (GlcNAc...) asparagine glycan is linked to asparagine 162. Aspartate 202 serves as the catalytic Proton donor. Cysteines 204 and 220 form a disulfide. The active site involves histidine 224. Cystine bridges form between cysteine 330-cysteine 335 and cysteine 354-cysteine 363.

It belongs to the glycosyl hydrolase 28 family.

Its subcellular location is the secreted. It carries out the reaction (1,4-alpha-D-galacturonosyl)n+m + H2O = (1,4-alpha-D-galacturonosyl)n + (1,4-alpha-D-galacturonosyl)m.. In terms of biological role, involved in maceration and soft-rotting of plant tissue. Hydrolyzes the 1,4-alpha glycosidic bonds of de-esterified pectate in the smooth region of the plant cell wall. The polypeptide is Probable endopolygalacturonase A (pgaA) (Aspergillus parasiticus).